A 555-amino-acid polypeptide reads, in one-letter code: Formate--tetrahydrofolate ligase (555 aa).

Residue 65 to 72 coordinates ATP; sequence TPAGEGKT.

It belongs to the formate--tetrahydrofolate ligase family.

It carries out the reaction (6S)-5,6,7,8-tetrahydrofolate + formate + ATP = (6R)-10-formyltetrahydrofolate + ADP + phosphate. It participates in one-carbon metabolism; tetrahydrofolate interconversion. This chain is Formate--tetrahydrofolate ligase, found in Thermoanaerobacter pseudethanolicus (strain ATCC 33223 / 39E) (Clostridium thermohydrosulfuricum).